Reading from the N-terminus, the 179-residue chain is Transcription factor 21 (179 aa).

Positions 20–86 (CDGIKLDPNK…KQVQRNAANA (67 aa)) are disordered. The span at 34-46 (SNDSNEESSTCDN) shows a compositional bias: polar residues. The segment covering 50-64 (KKGRGTSGKRRKASS) has biased composition (basic residues). Polar residues predominate over residues 70–80 (GTINQEGKQVQ). Residues 79-131 (VQRNAANARERARMRVLSKAFSRLKTTLPWVPPDTKLSKLDTLRLASSYIAHL) enclose the bHLH domain.

In terms of assembly, efficient DNA binding requires dimerization with another bHLH protein. As to expression, at the start of neurulation (stage 13), expressed in the pronephros. At tailbud stage (stage 25-28), expression is high in the anterior-most branchial arch and pronephric glomus. At stage 40, staining persists in the glomus and in the epicardium region of the heart, and at stage 42, expression is higher in the glomus than in the kidney tubule or duct. In adults, expression is highest in the rectum and the spleen, with significant expression in the duodenum, heart, kidney, lungs, pancreas, skin, liver and muscle.

It is found in the nucleus. Functionally, involved in epithelial-mesenchymal interactions in kidney and lung morphogenesis that include epithelial differentiation and branching morphogenesis. The protein is Transcription factor 21 (tcf21) of Xenopus laevis (African clawed frog).